A 573-amino-acid chain; its full sequence is Potassium-transporting ATPase potassium-binding subunit (573 aa).

Helical transmembrane passes span 6 to 26 (ILFALFIVTIALITKPLGSYI), 66 to 86 (FFSLVSFSVMAFIFVLVILLL), 135 to 155 (ALAVQNFVSAAVGLCVAIALI), 177 to 197 (VFWILLPISIVIAIVYIFQGV), 257 to 277 (IQMVSIFAIAAALTYTFGKWV), 283 to 303 (GWLIFGVMLVLFIISLVVMTI), 382 to 402 (IFGGVGAGFYGFFMFLMLAVF), 428 to 448 (MFALLIFPCCVLVFTGLAAVI), 493 to 513 (ITIALSMLIGRFGVIFAVIML), and 537 to 557 (FIFAILVFFTILLIGGLTIFP).

This sequence belongs to the KdpA family. As to quaternary structure, the system is composed of three essential subunits: KdpA, KdpB and KdpC.

The protein localises to the cell inner membrane. Its function is as follows. Part of the high-affinity ATP-driven potassium transport (or Kdp) system, which catalyzes the hydrolysis of ATP coupled with the electrogenic transport of potassium into the cytoplasm. This subunit binds the periplasmic potassium ions and delivers the ions to the membrane domain of KdpB through an intramembrane tunnel. The chain is Potassium-transporting ATPase potassium-binding subunit from Francisella tularensis subsp. holarctica (strain FTNF002-00 / FTA).